The following is a 144-amino-acid chain: Large ribosomal subunit protein uL15 (144 aa).

A disordered region spans residues 1–57 (MKLNDLSPAPGSRREKHRPGRGIGSGLGKTGGRGHKGQSSRSGGTIAPGFEGGQQPL). The segment covering 21–31 (RGIGSGLGKTG) has biased composition (gly residues).

This sequence belongs to the universal ribosomal protein uL15 family. In terms of assembly, part of the 50S ribosomal subunit.

Functionally, binds to the 23S rRNA. In Pseudomonas savastanoi pv. phaseolicola (strain 1448A / Race 6) (Pseudomonas syringae pv. phaseolicola (strain 1448A / Race 6)), this protein is Large ribosomal subunit protein uL15.